Reading from the N-terminus, the 277-residue chain is MAVKGFRPTTPTRREMTMCTFEEITTSTPEKSLLVSLKKSGGRNANGKITVRHIGGGAKRKYRVIDFKRNKDNISAKVVSIEYDPNRTAFIALVVYADGEKRYMIAPVGLKVGDTVVSGPESDIKVGNCLPIRNIPVGTVIHNIELAPGKGAQLVRSAGNSAQLMAKEGDYSQVRLPSGEVRYIRVECRATIGVVSNQTNEIVNIGKAGRKRHMGVRPTVRGSVMNPNDHPHGGGEGRSPIGHPSPRTPWGKPALGYKTRKNKKYSDRFIVKRRHDK.

The disordered stretch occupies residues 219-277; sequence TVRGSVMNPNDHPHGGGEGRSPIGHPSPRTPWGKPALGYKTRKNKKYSDRFIVKRRHDK.

Belongs to the universal ribosomal protein uL2 family. Part of the 50S ribosomal subunit. Forms a bridge to the 30S subunit in the 70S ribosome.

One of the primary rRNA binding proteins. Required for association of the 30S and 50S subunits to form the 70S ribosome, for tRNA binding and peptide bond formation. It has been suggested to have peptidyltransferase activity; this is somewhat controversial. Makes several contacts with the 16S rRNA in the 70S ribosome. The sequence is that of Large ribosomal subunit protein uL2 from Clostridium botulinum (strain Okra / Type B1).